Here is a 380-residue protein sequence, read N- to C-terminus: Cytochrome b (380 aa).

The next 4 helical transmembrane spans lie at 34–54, 78–99, 114–134, and 179–199; these read FGSL…LLAA, WLIR…YLHI, WNTG…GYVL, and FFTL…IHLT. Positions 84 and 98 each coordinate heme b. Residues His183 and His197 each coordinate heme b. His202 is a binding site for a ubiquinone. Helical transmembrane passes span 227 to 247, 289 to 309, 321 to 341, and 348 to 368; these read TKDI…ALFS, LGGV…PLLH, LSQL…WIGS, and FIII…ILFP.

Belongs to the cytochrome b family. The cytochrome bc1 complex contains 11 subunits: 3 respiratory subunits (MT-CYB, CYC1 and UQCRFS1), 2 core proteins (UQCRC1 and UQCRC2) and 6 low-molecular weight proteins (UQCRH/QCR6, UQCRB/QCR7, UQCRQ/QCR8, UQCR10/QCR9, UQCR11/QCR10 and a cleavage product of UQCRFS1). This cytochrome bc1 complex then forms a dimer. It depends on heme b as a cofactor.

It localises to the mitochondrion inner membrane. Component of the ubiquinol-cytochrome c reductase complex (complex III or cytochrome b-c1 complex) that is part of the mitochondrial respiratory chain. The b-c1 complex mediates electron transfer from ubiquinol to cytochrome c. Contributes to the generation of a proton gradient across the mitochondrial membrane that is then used for ATP synthesis. The chain is Cytochrome b (MT-CYB) from Eudyptes chrysocome (Western rockhopper penguin).